The primary structure comprises 102 residues: Large ribosomal subunit protein bL21 (102 aa).

Belongs to the bacterial ribosomal protein bL21 family. As to quaternary structure, part of the 50S ribosomal subunit. Contacts protein L20.

Its function is as follows. This protein binds to 23S rRNA in the presence of protein L20. This is Large ribosomal subunit protein bL21 from Enterococcus faecalis (strain ATCC 700802 / V583).